The primary structure comprises 330 residues: Formylaminopyrimidine-binding protein (330 aa).

The signal sequence occupies residues 1–18 (MKSFKIISLLLAILFLAS). Cys-19 is lipidated: N-palmitoyl cysteine. Cys-19 carries S-diacylglycerol cysteine lipidation. Residues 38–39 (DW), Tyr-90, Asn-145, Tyr-188, and Glu-192 contribute to the substrate site.

It belongs to the NMT1 family. As to quaternary structure, the complex is likely composed of an ATP-binding protein (ThiZ), a transmembrane protein (ThiX) and a solute-binding protein (ThiY).

The protein localises to the cell membrane. It functions in the pathway cofactor biosynthesis; thiamine diphosphate biosynthesis. In terms of biological role, participates in a thiamine pyrimidine salvage pathway as part of the ABC transporter complex ThiXYZ involved in the import of thiamine degradation products. Binds the formylaminopyrimidine N-formyl-4-amino-5-aminomethyl-2-methylpyrimidine (FAMP). Does not bind thiamine. The sequence is that of Formylaminopyrimidine-binding protein from Halalkalibacterium halodurans (strain ATCC BAA-125 / DSM 18197 / FERM 7344 / JCM 9153 / C-125) (Bacillus halodurans).